The chain runs to 89 residues: Small ribosomal subunit protein uS15 (89 aa).

The protein belongs to the universal ribosomal protein uS15 family. Part of the 30S ribosomal subunit. Forms a bridge to the 50S subunit in the 70S ribosome, contacting the 23S rRNA.

In terms of biological role, one of the primary rRNA binding proteins, it binds directly to 16S rRNA where it helps nucleate assembly of the platform of the 30S subunit by binding and bridging several RNA helices of the 16S rRNA. Its function is as follows. Forms an intersubunit bridge (bridge B4) with the 23S rRNA of the 50S subunit in the ribosome. The protein is Small ribosomal subunit protein uS15 of Paraburkholderia phymatum (strain DSM 17167 / CIP 108236 / LMG 21445 / STM815) (Burkholderia phymatum).